The sequence spans 786 residues: Pentatricopeptide repeat-containing protein 10, chloroplastic (786 aa).

The tract at residues 1-71 (MEATGRGLFP…HQTPTPPHSF (71 aa)) is disordered. The transit peptide at 1 to 95 (MEATGRGLFP…HPLPTLAAFL (95 aa)) directs the protein to the chloroplast. Residues 27–36 (PAAPPPPSPS) are compositionally biased toward pro residues. Over residues 37-50 (SLPLDSLLLHLTAP) the composition is skewed to low complexity. 18 PPR repeats span residues 137 to 167 (DASALEMVVRALGREGQHDAVCALLDETPLP), 173 to 207 (DVRAYTTVLHALSRAGRYERALELFAELRRQGVAP), 208 to 243 (TLVTYNVVLDVYGRMGRSWPRIVALLDEMRAAGVEP), 244 to 278 (DGFTASTVIAACCRDGLVDEAVAFFEDLKARGHAP), 279 to 313 (CVVTYNALLQVFGKAGNYTEALRVLGEMEQNGCQP), 314 to 348 (DAVTYNELAGTYARAGFFEEAARCLDTMASKGLLP), 349 to 383 (NAFTYNTVMTAYGNVGKVDEALALFDQMKKTGFVP), 384 to 418 (NVNTYNLVLGMLGKKSRFTVMLEMLGEMSRSGCTP), 419 to 453 (NRVTWNTMLAVCGKRGMEDYVTRVLEGMRSCGVEL), 454 to 488 (SRDTYNTLIAAYGRCGSRTNAFKMYNEMTSAGFTP), 489 to 523 (CITTYNALLNVLSRQGDWSTAQSIVSKMRTKGFKP), 524 to 558 (NEQSYSLLLQCYAKGGNVAGIAAIENEVYGSGAVF), 560 to 594 (SWVILRTLVIANFKCRRLDGMETAFQEVKARGYNP), 595 to 629 (DLVIFNSMLSIYAKNGMYSKATEVFDSIKRSGLSP), 630 to 664 (DLITYNSLMDMYAKCSESWEAEKILNQLKCSQTMK), 666 to 700 (DVVSYNTVINGFCKQGLVKEAQRVLSEMVADGMAP), 701 to 735 (CAVTYHTLVGGYSSLEMFSEAREVIGYMVQHGLKP), and 736 to 770 (MELTYRRVVESYCRAKRFEEARGFLSEVSETDLDF).

It belongs to the PPR family. P subfamily. Forms homodimers.

It localises to the plastid. Its subcellular location is the chloroplast stroma. In terms of biological role, involved in chloroplast mRNA stability. Binds specifically to two intergenic RNA regions of similar sequence located in the chloroplast atpH 5'-UTR and psaJ 3'-UTR, and serves as a barrier to RNA decay. Binding to a specific site in the intergenic region of the chloroplast atpH is sufficient to block 5'-3' and 3'-5' exonucleases. Acts as a protein barrier to block mRNA degradation by exonucleases, and defines processed mRNA termini in chloroplasts. Remodels the structure of the atpH ribosome-binding site in a manner that can account for its ability to enhance translation. Stabilizes a RNA 3'-end downstream from psaI. Binds atpH RNA as a monomer. In Zea mays (Maize), this protein is Pentatricopeptide repeat-containing protein 10, chloroplastic.